Reading from the N-terminus, the 340-residue chain is Sterol-4-alpha-carboxylate 3-dehydrogenase erg26, decarboxylating (340 aa).

Y144 serves as the catalytic Proton acceptor. Position 148 (K148) interacts with NAD(+).

Belongs to the 3-beta-HSD family. As to quaternary structure, heterotetramer of erg25, erg26, erg27 and erg28. Erg28 acts as a scaffold to tether erg27 and other 4,4-demethylation-related enzymes, forming a demethylation enzyme complex, in the endoplasmic reticulum.

The protein resides in the endoplasmic reticulum membrane. The enzyme catalyses 4beta-methylzymosterol-4alpha-carboxylate + NADP(+) = 3-dehydro-4-methylzymosterol + CO2 + NADPH. The protein operates within steroid biosynthesis; zymosterol biosynthesis; zymosterol from lanosterol: step 4/6. It participates in steroid metabolism; ergosterol biosynthesis. In terms of biological role, sterol-4-alpha-carboxylate 3-dehydrogenase; part of the third module of ergosterol biosynthesis pathway that includes by the late steps of the pathway. Erg26 is a catalytic component of the C-4 demethylation complex that catalyzes the oxidative decarboxylation that results in a reduction of the 3-beta-hydroxy group at the C-3 carbon to an oxo group. The third module or late pathway involves the ergosterol synthesis itself through consecutive reactions that mainly occur in the endoplasmic reticulum (ER) membrane. Firstly, the squalene synthase erg9 catalyzes the condensation of 2 farnesyl pyrophosphate moieties to form squalene, which is the precursor of all steroids. Secondly, squalene is converted into lanosterol by the consecutive action of the squalene epoxidase erg1 and the lanosterol synthase erg7. The lanosterol 14-alpha-demethylase erg11/cyp1 catalyzes C14-demethylation of lanosterol to produce 4,4'-dimethyl cholesta-8,14,24-triene-3-beta-ol. In the next steps, a complex process involving various demethylation, reduction and desaturation reactions catalyzed by the C-14 reductase erg24 and the C-4 demethylation complex erg25-erg26-erg27 leads to the production of zymosterol. Erg28 likely functions in the C-4 demethylation complex reaction by tethering erg26 and Erg27 to the endoplasmic reticulum or to facilitate interaction between these proteins. Then, the sterol 24-C-methyltransferase erg6 catalyzes the methyl transfer from S-adenosyl-methionine to the C-24 of zymosterol to form fecosterol. The C-8 sterol isomerase erg2 catalyzes the reaction which results in unsaturation at C-7 in the B ring of sterols and thus converts fecosterol to episterol. The sterol-C5-desaturases erg31 and erg32 then catalyze the introduction of a C-5 double bond in the B ring to produce 5-dehydroepisterol. The C-22 sterol desaturase erg5 further converts 5-dehydroepisterol into ergosta-5,7,22,24(28)-tetraen-3beta-ol by forming the C-22(23) double bond in the sterol side chain. Finally, ergosta-5,7,22,24(28)-tetraen-3beta-ol is substrate of the C-24(28) sterol reductase erg4 to produce ergosterol. In the genus Schizosaccharomyces, a second route exists between lanosterol and fecosterol, via the methylation of lanosterol to eburicol by erg6, followed by C14-demethylation by erg11/cyp1 and C4-demethylation by the demethylation complex erg25-erg26-erg27. The protein is Sterol-4-alpha-carboxylate 3-dehydrogenase erg26, decarboxylating of Schizosaccharomyces pombe (strain 972 / ATCC 24843) (Fission yeast).